A 326-amino-acid chain; its full sequence is L-threo-3-hydroxyaspartate ammonia-lyase (326 aa).

Residue K53 is modified to N6-(pyridoxal phosphate)lysine. Residues N80, 179-183 (GGGGL), and S304 each bind pyridoxal 5'-phosphate.

The protein belongs to the serine/threonine dehydratase family. In terms of assembly, monomer. The cofactor is pyridoxal 5'-phosphate. It depends on Mn(2+) as a cofactor. Mg(2+) serves as cofactor. Ca(2+) is required as a cofactor.

The enzyme catalyses (3S)-3-hydroxy-L-aspartate = oxaloacetate + NH4(+). Is strongly inhibited by hydroxylamine and EDTA in vitro. Functionally, catalyzes the deamination of L-threo-3-hydroxyaspartate to oxaloacetate and ammonia. Shows a high specificity towards L-threo-3-hydroxyaspartate as other 3-hydroxyaminoacids, i.e. D,L-erythro- and D-threo-3-hydroxyaspartate, D-threonine, L-threonine, D,L-allothreonine, D-serine, and L-serine, are not substrates for this enzyme. Exhibits no detectable serine racemase activity. Is responsible for the 3-hydroxyaspartate resistance of S.cerevisiae, and thus may be involved in the detoxification of naturally occurring 3-hydroxyaspartate. The protein is L-threo-3-hydroxyaspartate ammonia-lyase (SRY1) of Saccharomyces cerevisiae (strain ATCC 204508 / S288c) (Baker's yeast).